A 218-amino-acid chain; its full sequence is Protein-lysine N-methyltransferase M142.8 (218 aa).

The protein belongs to the class I-like SAM-binding methyltransferase superfamily. EFM5 family.

Its subcellular location is the cytoplasm. Functionally, S-adenosyl-L-methionine-dependent protein-lysine N-methyltransferase that methylates elongation factor 1-alpha. This Caenorhabditis elegans protein is Protein-lysine N-methyltransferase M142.8.